Reading from the N-terminus, the 74-residue chain is Ferredoxin-like protein in nif region (74 aa).

The 29-residue stretch at 2–30 folds into the 4Fe-4S ferredoxin-type domain; it reads PFKIIASQCTSCSACEPLCPNVAISEKGG. Cysteine 10, cysteine 13, cysteine 16, cysteine 20, cysteine 39, cysteine 51, and cysteine 55 together coordinate [4Fe-4S] cluster.

It depends on [4Fe-4S] cluster as a cofactor.

The polypeptide is Ferredoxin-like protein in nif region (frxA) (Bradyrhizobium diazoefficiens (strain JCM 10833 / BCRC 13528 / IAM 13628 / NBRC 14792 / USDA 110)).